A 288-amino-acid polypeptide reads, in one-letter code: Light-independent protochlorophyllide reductase iron-sulfur ATP-binding protein (288 aa).

ATP is bound by residues 10–15 (GIGKST) and Lys39. Residue Ser14 coordinates Mg(2+). Cys95 and Cys129 together coordinate [4Fe-4S] cluster. An ATP-binding site is contributed by 180-181 (NR).

Belongs to the NifH/BchL/ChlL family. In terms of assembly, homodimer. Protochlorophyllide reductase is composed of three subunits; ChlL, ChlN and ChlB. It depends on [4Fe-4S] cluster as a cofactor.

The catalysed reaction is chlorophyllide a + oxidized 2[4Fe-4S]-[ferredoxin] + 2 ADP + 2 phosphate = protochlorophyllide a + reduced 2[4Fe-4S]-[ferredoxin] + 2 ATP + 2 H2O. It participates in porphyrin-containing compound metabolism; chlorophyll biosynthesis (light-independent). Functionally, component of the dark-operative protochlorophyllide reductase (DPOR) that uses Mg-ATP and reduced ferredoxin to reduce ring D of protochlorophyllide (Pchlide) to form chlorophyllide a (Chlide). This reaction is light-independent. The L component serves as a unique electron donor to the NB-component of the complex, and binds Mg-ATP. This is Light-independent protochlorophyllide reductase iron-sulfur ATP-binding protein from Nostoc sp. (strain PCC 7120 / SAG 25.82 / UTEX 2576).